The following is a 342-amino-acid chain: MKYLVLALCTYLCSQSGADENAAQGIPLEAQRLTGEPLVAYLRRSQNLFEVNSDPTPDFEQKIMSIKYKHQKLNLMVKEDPDPEVDIPPSYDPRDVWKNCTTFYIRDQANCGSCWAVSTAAAISDRICIASKAEKQVNISATDIMTCCRPQCGDGCEGGWPIEAWKYFIYDGVVSGGEYLTKDVCRPYPIHPCGHHGNDTYYGECRGTAPTPPCKRKCRPGVRKMYRIDKRYGKDAYIVKQSVKAIQSEILKNGPVVASFAVYEDFRHYKSGIYKHTAGELRGYHAVKMIGWGNENNTDFWLIANSWHNDWGEKGYFRIVRGSNDCGIEGTIAAGIVDTESL.

An N-terminal signal peptide occupies residues 1–18; it reads MKYLVLALCTYLCSQSGA. Residues 19 to 86 constitute a propeptide, activation peptide; sequence DENAAQGIPL…VKEDPDPEVD (68 aa). Asn99 is a glycosylation site (N-linked (GlcNAc...) asparagine). 6 disulfide bridges follow: Cys100–Cys128, Cys111–Cys156, Cys147–Cys214, Cys148–Cys152, Cys185–Cys218, and Cys193–Cys205. The active site involves Cys114. An N-linked (GlcNAc...) asparagine glycan is attached at Asn138. Asn198 carries an N-linked (GlcNAc...) asparagine glycan. His285 is a catalytic residue. The N-linked (GlcNAc...) asparagine glycan is linked to Asn296. Residue Asn305 is part of the active site.

It belongs to the peptidase C1 family.

Expression of the protease correlates with blood-feeding and suggests a role for the protease in blood digestion. The sequence is that of Cathepsin B-like cysteine proteinase 2 (AC-2) from Haemonchus contortus (Barber pole worm).